A 304-amino-acid chain; its full sequence is Eukaryotic translation initiation factor 2 subunit alpha (304 aa).

An S1 motif domain is found at 17 to 88; sequence DDIVMVNVQQ…EKGYIDLSKR (72 aa). Residue Ser-52 is modified to Phosphoserine; by GCN2. Residues 283–304 are disordered; that stretch reads LESKELDNRSDSEDDEDESDDE. Positions 284–293 are enriched in basic and acidic residues; that stretch reads ESKELDNRSD. Phosphoserine occurs at positions 292 and 294. Positions 294 to 304 are enriched in acidic residues; it reads SEDDEDESDDE.

This sequence belongs to the eIF-2-alpha family. Eukaryotic translation initiation factor 2 eIF2 is a heterotrimeric complex composed of an alpha, a beta and a gamma subunit. The factors eIF-1, eIF-2, eIF-3, TIF5/eIF-5 and methionyl-tRNAi form a multifactor complex (MFC) that may bind to the 40S ribosome. Interacts with CDC123; the interaction is direct. Interacts with GCD1. Post-translationally, phosphorylated; phosphorylation on Ser-52 by the GCN2 protein kinase occurs in response to low amino acid, carbon, or purine availability. Phosphorylation inhibits the guanine nucleotide exchange factor activity of the eIF2B complex.

The protein localises to the cytoplasm. The protein resides in the cytosol. In terms of biological role, eIF-2 functions in the early steps of protein synthesis by forming a ternary complex with GTP and initiator tRNA. This complex binds to a 40S ribosomal subunit, followed by mRNA binding to form a 43S pre-initiation complex. Junction of the 60S ribosomal subunit to form the 80S initiation complex is preceded by hydrolysis of the GTP bound to eIF-2 and release of an eIF-2-GDP binary complex. In order for eIF-2 to recycle and catalyze another round of initiation, the GDP bound to eIF-2 must exchange with GTP by way of a reaction catalyzed by eIF2B. This Saccharomyces cerevisiae (strain ATCC 204508 / S288c) (Baker's yeast) protein is Eukaryotic translation initiation factor 2 subunit alpha.